The following is a 164-amino-acid chain: MTTAFYPGSFDPMTNGHLDVLVQALNVASKVIVAIGIHPGKTPLFSFDERAGLIRRSLSESLPQRAGDIAVVAFDNLVVDAARQHGASLLVRGLRDGTDLDYEMQMAGMNRQMAPDIQTLFLPAGTASRPITATLVRQIAAMGGNVSAFVPGPVFQALQAKHKA.

Ser-9 contacts substrate. Residues Ser-9–Phe-10 and His-17 each bind ATP. Substrate is bound by residues Lys-41, Val-78, and Arg-92. ATP contacts are provided by residues Gly-93–Arg-95, Glu-103, and Ser-128–Thr-134.

Belongs to the bacterial CoaD family. Homohexamer. Mg(2+) serves as cofactor.

Its subcellular location is the cytoplasm. The enzyme catalyses (R)-4'-phosphopantetheine + ATP + H(+) = 3'-dephospho-CoA + diphosphate. The protein operates within cofactor biosynthesis; coenzyme A biosynthesis; CoA from (R)-pantothenate: step 4/5. In terms of biological role, reversibly transfers an adenylyl group from ATP to 4'-phosphopantetheine, yielding dephospho-CoA (dPCoA) and pyrophosphate. This is Phosphopantetheine adenylyltransferase from Sinorhizobium fredii (strain NBRC 101917 / NGR234).